Consider the following 153-residue polypeptide: Ribosome maturation factor RimP (153 aa).

The protein belongs to the RimP family.

The protein localises to the cytoplasm. Required for maturation of 30S ribosomal subunits. This chain is Ribosome maturation factor RimP, found in Acidithiobacillus ferrooxidans (strain ATCC 53993 / BNL-5-31) (Leptospirillum ferrooxidans (ATCC 53993)).